Consider the following 632-residue polypeptide: DNA polymerase eta (632 aa).

One can recognise a UmuC domain in the interval Ile26–Gly309. Asp30 and Asp155 together coordinate Mg(2+). A UBZ3-type zinc finger spans residues Glu545 to Gly580. Zn(2+)-binding residues include Cys552, Cys553, His568, and His572. The segment at Leu598–Lys632 is disordered. Residues Ser607–Ser626 are compositionally biased toward polar residues. Residues Leu625–Lys632 form a POL30-binding region.

Belongs to the DNA polymerase type-Y family. Interacts with POL30. This interaction is essential for the polymerase eta function.

Its subcellular location is the nucleus. It carries out the reaction DNA(n) + a 2'-deoxyribonucleoside 5'-triphosphate = DNA(n+1) + diphosphate. DNA polymerase specifically involved in DNA repair. Plays an important role in translesion synthesis, where the normal high fidelity DNA polymerases cannot proceed and DNA synthesis stalls. Plays an important role in the repair of UV-induced pyrimidine dimers. Depending on the context, it inserts the correct base, but causes frequent base transitions and transversions. Efficiently incorporates nucleotides opposite to other UV or oxidative DNA damages like O(6)-methylguanine, 7,8-dihydro-8-oxoguanine, 2,6-diamino-4-hydroxy-5-formamidopyrimidine of 2'-deoxyguanosine (FaPydG), or p-benzoquinone DNA adducts. The protein is DNA polymerase eta (RAD30) of Saccharomyces cerevisiae (strain ATCC 204508 / S288c) (Baker's yeast).